A 434-amino-acid polypeptide reads, in one-letter code: Protein HEAT INTOLERANT 4 (434 aa).

The Nuclear localization signal 1 signature appears at 1–8; the sequence is MKKGAKRK. A compositionally biased stretch (basic residues) spans 1-15; it reads MKKGAKRKGVSKAGR. The segment at 1–131 is disordered; the sequence is MKKGAKRKGV…PVPKAKKPRA (131 aa). A compositionally biased stretch (basic and acidic residues) spans 30 to 53; the sequence is ETTKTTQEESQQHEEEVVDEVKEN. A compositionally biased stretch (acidic residues) spans 54 to 82; sequence GEEEEAKGDQEEEEDAKPDSLEEDEENQE. Residues 83–98 are compositionally biased toward basic and acidic residues; it reads DEVKAEEVKEEVEKKP. Residues 95-102 carry the Nuclear localization signal 2 motif; sequence EKKPVARR. Residues 99–110 show a composition bias toward basic residues; sequence VARRGGKRKRAT. The segment covering 111–122 has biased composition (basic and acidic residues); that stretch reads KKDTEIKDEKKP. The stretch at 363 to 394 forms a coiled coil; sequence VKEQVRAAKKANREAKDARKKAIEEMSEDTKQ. The short motif at 370-377 is the Nuclear localization signal 3 element; it reads AKKANREA.

It is found in the nucleus. The protein resides in the nucleolus. Functionally, essential protein required for basal thermotolerance, especially during heat-induced chromocentre decondensation, thus regulating transcriptional gene silencing (TGS). In Arabidopsis thaliana (Mouse-ear cress), this protein is Protein HEAT INTOLERANT 4.